Consider the following 770-residue polypeptide: Kinesin-like protein klpA (770 aa).

Residues 1 to 152 (MENVQSRMQG…GLGKRGEWDQ (152 aa)) are disordered. The span at 85–105 (SSTLTRSASAASRPRGPLSSS) shows a compositional bias: low complexity. Residues 106 to 119 (TSGRPKTSMSTSRR) are compositionally biased toward polar residues. Residues 134–152 (THQEERSYGGLGKRGEWDQ) show a composition bias toward basic and acidic residues. A coiled-coil region spans residues 175 to 425 (QESSGLKDAL…QELKGNIRVF (251 aa)). The 336-residue stretch at 421–756 (NIRVFCRVRP…LKFATKVHNT (336 aa)) folds into the Kinesin motor domain. ATP is bound at residue 514 to 521 (GQTGSGKT).

It belongs to the TRAFAC class myosin-kinesin ATPase superfamily. Kinesin family. NCD subfamily.

Its subcellular location is the cytoplasm. The protein resides in the cytoskeleton. This is Kinesin-like protein klpA (klpA) from Emericella nidulans (strain FGSC A4 / ATCC 38163 / CBS 112.46 / NRRL 194 / M139) (Aspergillus nidulans).